The sequence spans 610 residues: UvrABC system protein C (610 aa).

Residues 16-94 form the GIY-YIG domain; the sequence is SQPGVYRMYD…IKLYQPRYNV (79 aa). Residues 204–239 enclose the UVR domain; the sequence is QQVLTRLIERMEQASQQLKFEDAARYRDQIQAVRQV.

This sequence belongs to the UvrC family. In terms of assembly, interacts with UvrB in an incision complex.

The protein resides in the cytoplasm. The UvrABC repair system catalyzes the recognition and processing of DNA lesions. UvrC both incises the 5' and 3' sides of the lesion. The N-terminal half is responsible for the 3' incision and the C-terminal half is responsible for the 5' incision. The polypeptide is UvrABC system protein C (Photorhabdus laumondii subsp. laumondii (strain DSM 15139 / CIP 105565 / TT01) (Photorhabdus luminescens subsp. laumondii)).